A 169-amino-acid polypeptide reads, in one-letter code: Lipoprotein signal peptidase (169 aa).

The next 4 membrane-spanning stretches (helical) occupy residues Pro-4–Ile-24, Trp-29–Thr-49, Trp-70–Ser-90, and Tyr-101–Val-121. Active-site residues include Asp-123 and Asp-141. A helical membrane pass occupies residues Phe-137–Leu-157.

The protein belongs to the peptidase A8 family.

The protein localises to the cell inner membrane. It carries out the reaction Release of signal peptides from bacterial membrane prolipoproteins. Hydrolyzes -Xaa-Yaa-Zaa-|-(S,diacylglyceryl)Cys-, in which Xaa is hydrophobic (preferably Leu), and Yaa (Ala or Ser) and Zaa (Gly or Ala) have small, neutral side chains.. It functions in the pathway protein modification; lipoprotein biosynthesis (signal peptide cleavage). Functionally, this protein specifically catalyzes the removal of signal peptides from prolipoproteins. The polypeptide is Lipoprotein signal peptidase (Yersinia pseudotuberculosis serotype O:1b (strain IP 31758)).